Reading from the N-terminus, the 481-residue chain is MEVASQALGPLVTELYDVQAFKFGSFVLKSGLSSPVYIDLRGIVSRPRLLSQVADILFQTAKNAGISFDSVCGVPYTALPLATVICSANHIPMLIRRKETKDYGTKRLVEGEINPGQTCLVIEDVVTSGASVLETVEVLQKEGLKVTDAIVLLDREQGGKDKLQAQGIRLHAVCTLSQMLEILQQQEKIDADMVGRVKRFIQENVFSAANHNGLPPPEKKACKELSFGARAELPGTHPLASKLLRLMQKKETNLCLSADVSEARELLQLADALGPSICMLKTHVDILNDFTLDVMEELTALAKRHEFLIFEDRKFADIGNTVKKQYESGTFKIASWADIVNAHVVPGSGVVKGLQEVGLPLHRACLLIAEMSSAGSLATGNYTKAAVGMAEEHCEFVIGFISGSRVSMKPEFLHLTPGVQLETGGDHLGQQYNSPQEVIGKRGSDVIIVGRGILAAANRLEAAEMYRKAAWEAYLSRLAVQ.

The OPRTase stretch occupies residues 1 to 214 (MEVASQALGP…VFSAANHNGL (214 aa)). At Tyr37 the chain carries Phosphotyrosine. A domain linker region spans residues 215 to 220 (PPPEKK). The segment at 221–481 (ACKELSFGAR…EAYLSRLAVQ (261 aa)) is OMPdecase. Residue Ser257 participates in orotidine 5'-phosphate binding. UMP-binding positions include Ser257, Asp259, and 281–283 (KTH). Orotidine 5'-phosphate-binding positions include Lys281, Lys314, Asp317, Thr321, Ser372, 430–432 (QQY), and 450–451 (GR). Residues Lys314 and Asp317 each act as for OMPdecase activity in the active site. UMP is bound by residues Asp317, Thr321, Ser372, 430 to 432 (QQY), and 450 to 451 (GR).

In the N-terminal section; belongs to the purine/pyrimidine phosphoribosyltransferase family. It in the C-terminal section; belongs to the OMP decarboxylase family. Homodimer; dimerization is required for enzymatic activity.

The enzyme catalyses orotidine 5'-phosphate + diphosphate = orotate + 5-phospho-alpha-D-ribose 1-diphosphate. The catalysed reaction is orotidine 5'-phosphate + H(+) = UMP + CO2. Its pathway is pyrimidine metabolism; UMP biosynthesis via de novo pathway; UMP from orotate: step 1/2. It functions in the pathway pyrimidine metabolism; UMP biosynthesis via de novo pathway; UMP from orotate: step 2/2. Functionally, bifunctional enzyme catalyzing the last two steps of de novo pyrimidine biosynthesis, orotate phosphoribosyltransferase (OPRT), which converts orotate to orotidine-5'-monophosphate (OMP), and orotidine-5'-monophosphate decarboxylase (ODC), the terminal enzymatic reaction that decarboxylates OMP to uridine monophosphate (UMP). The sequence is that of Uridine 5'-monophosphate synthase (Umps) from Mus musculus (Mouse).